Here is a 140-residue protein sequence, read N- to C-terminus: Cysteine desulfuration protein SufE (140 aa).

C51 (cysteine persulfide intermediate) is an active-site residue.

It belongs to the SufE family. Homodimer. Interacts with SufS.

The protein resides in the cytoplasm. Its pathway is cofactor biosynthesis; iron-sulfur cluster biosynthesis. In terms of biological role, participates in cysteine desulfuration mediated by SufS. Cysteine desulfuration mobilizes sulfur from L-cysteine to yield L-alanine and constitutes an essential step in sulfur metabolism for biosynthesis of a variety of sulfur-containing biomolecules. Functions as a sulfur acceptor for SufS, by mediating the direct transfer of the sulfur atom from the S-sulfanylcysteine of SufS, an intermediate product of cysteine desulfuration process. The protein is Cysteine desulfuration protein SufE of Yersinia pestis bv. Antiqua (strain Antiqua).